Reading from the N-terminus, the 227-residue chain is Uracil-DNA glycosylase (227 aa).

Asp64 functions as the Proton acceptor in the catalytic mechanism.

It belongs to the uracil-DNA glycosylase (UDG) superfamily. UNG family.

It localises to the cytoplasm. The catalysed reaction is Hydrolyzes single-stranded DNA or mismatched double-stranded DNA and polynucleotides, releasing free uracil.. Excises uracil residues from the DNA which can arise as a result of misincorporation of dUMP residues by DNA polymerase or due to deamination of cytosine. This is Uracil-DNA glycosylase from Sodalis glossinidius (strain morsitans).